The primary structure comprises 262 residues: Shikimate dehydrogenase (NADP(+)) (262 aa).

Residues 15-17 (SRS) and threonine 62 contribute to the shikimate site. Lysine 66 (proton acceptor) is an active-site residue. Position 78 (glutamate 78) interacts with NADP(+). Residues asparagine 87 and aspartate 102 each contribute to the shikimate site. Residues 126-130 (GAGGA), 150-155 (NRTLAR), and methionine 214 contribute to the NADP(+) site. Tyrosine 216 lines the shikimate pocket. Residue glycine 236 participates in NADP(+) binding.

The protein belongs to the shikimate dehydrogenase family. Homodimer.

The enzyme catalyses shikimate + NADP(+) = 3-dehydroshikimate + NADPH + H(+). The protein operates within metabolic intermediate biosynthesis; chorismate biosynthesis; chorismate from D-erythrose 4-phosphate and phosphoenolpyruvate: step 4/7. Functionally, involved in the biosynthesis of the chorismate, which leads to the biosynthesis of aromatic amino acids. Catalyzes the reversible NADPH linked reduction of 3-dehydroshikimate (DHSA) to yield shikimate (SA). This is Shikimate dehydrogenase (NADP(+)) from Acinetobacter baumannii (strain SDF).